The following is a 347-amino-acid chain: Dual specificity mitogen-activated protein kinase kinase 3 (347 aa).

Methionine 1 is subject to N-acetylmethionine. Low complexity predominate over residues 1–15; sequence MESPASSQPASMPQS. A disordered region spans residues 1-46; sequence MESPASSQPASMPQSKGKSKRKKDLRISCMSKPPAPNPTPPRNLDS. Phosphoserine is present on residues serine 3 and serine 15. In terms of domain architecture, Protein kinase spans 64-325; the sequence is LVTISELGRG…YLELMEHPFF (262 aa). ATP-binding positions include 70–78 and lysine 93; that span reads LGRGAYGVV. The active-site Proton acceptor is aspartate 190. Serine 218 is modified (phosphoserine). Threonine 222 is subject to Phosphothreonine.

It belongs to the protein kinase superfamily. STE Ser/Thr protein kinase family. MAP kinase kinase subfamily. In terms of assembly, component of a signaling complex containing at least AKAP13, PKN1, MAPK14, ZAK and MAP2K3. Within this complex, AKAP13 interacts directly with PKN1, which in turn recruits MAPK14, MAP2K3 and ZAK. Binds to DYRK1B/MIRK and increases its kinase activity. Part of a complex with MAP3K3, RAC1 and CCM2. Interacts with ARRB1. As to quaternary structure, (Microbial infection) Interacts with Yersinia YopJ. Autophosphorylated. Phosphorylation on Ser-218 and Thr-222 by MAP kinase kinase kinases positively regulates the kinase activity. Phosphorylated by TAOK2. In terms of processing, (Microbial infection) Yersinia YopJ may acetylate Ser/Thr residues, preventing phosphorylation and activation, thus blocking the MAPK signaling pathway. As to expression, abundant expression is seen in the skeletal muscle. It is also widely expressed in other tissues.

It catalyses the reaction L-seryl-[protein] + ATP = O-phospho-L-seryl-[protein] + ADP + H(+). It carries out the reaction L-threonyl-[protein] + ATP = O-phospho-L-threonyl-[protein] + ADP + H(+). The catalysed reaction is L-tyrosyl-[protein] + ATP = O-phospho-L-tyrosyl-[protein] + ADP + H(+). Activated by dual phosphorylation on Ser-218 and Thr-222. Functionally, dual specificity kinase. Is activated by cytokines and environmental stress in vivo. Catalyzes the concomitant phosphorylation of a threonine and a tyrosine residue in the MAP kinase p38. Part of a signaling cascade that begins with the activation of the adrenergic receptor ADRA1B and leads to the activation of MAPK14. The chain is Dual specificity mitogen-activated protein kinase kinase 3 (MAP2K3) from Homo sapiens (Human).